Reading from the N-terminus, the 551-residue chain is Alkaline nuclease (551 aa).

The protein belongs to the herpesviridae alkaline nuclease family. In terms of assembly, interacts with major DNA-binding protein; this interaction increases the nuclease processivity of the alkaline exonuclease.

It is found in the host nucleus. The protein resides in the host cytoplasm. Functionally, plays a role in processing non linear or branched viral DNA intermediates in order to promote the production of mature packaged unit-length linear progeny viral DNA molecules. Exhibits endonuclease and exonuclease activities and accepts both double-stranded and single-stranded DNA as substrate. Exonuclease digestion of DNA is in the 5'-&gt; 3' direction and the products are 5'-monophosphate nucleosides. Additionally, forms a recombinase with the major DNA-binding protein, which displays strand exchange activity. The sequence is that of Alkaline nuclease from Homo sapiens (Human).